Here is a 123-residue protein sequence, read N- to C-terminus: Large ribosomal subunit protein uL14c (123 aa).

It belongs to the universal ribosomal protein uL14 family. In terms of assembly, part of the 50S ribosomal subunit.

The protein localises to the plastid. It is found in the chloroplast. Binds to 23S rRNA. This chain is Large ribosomal subunit protein uL14c, found in Oryza nivara (Indian wild rice).